Consider the following 116-residue polypeptide: Large ribosomal subunit protein bL20 (116 aa).

The protein belongs to the bacterial ribosomal protein bL20 family.

In terms of biological role, binds directly to 23S ribosomal RNA and is necessary for the in vitro assembly process of the 50S ribosomal subunit. It is not involved in the protein synthesizing functions of that subunit. The sequence is that of Large ribosomal subunit protein bL20 from Desulfosudis oleivorans (strain DSM 6200 / JCM 39069 / Hxd3) (Desulfococcus oleovorans).